The sequence spans 130 residues: Large ribosomal subunit protein eL22 (130 aa).

The protein belongs to the eukaryotic ribosomal protein eL22 family.

This is Large ribosomal subunit protein eL22 (rpl-22) from Caenorhabditis elegans.